Reading from the N-terminus, the 383-residue chain is tRNA-specific 2-thiouridylase MnmA (383 aa).

ATP contacts are provided by residues 11 to 18 and M37; that span reads GLSGGVDS. Residues 97–99 form an interaction with target base in tRNA region; the sequence is NPD. Catalysis depends on C102, which acts as the Nucleophile. A disulfide bridge connects residues C102 and C200. G127 provides a ligand contact to ATP. Residues 150–152 are interaction with tRNA; that stretch reads KDQ. The active-site Cysteine persulfide intermediate is C200. The segment at 312–313 is interaction with tRNA; that stretch reads RY. Residues 361–383 are disordered; the sequence is IDTAHPADRSAPPALQTQSTEVV.

The protein belongs to the MnmA/TRMU family.

It is found in the cytoplasm. It catalyses the reaction S-sulfanyl-L-cysteinyl-[protein] + uridine(34) in tRNA + AH2 + ATP = 2-thiouridine(34) in tRNA + L-cysteinyl-[protein] + A + AMP + diphosphate + H(+). In terms of biological role, catalyzes the 2-thiolation of uridine at the wobble position (U34) of tRNA, leading to the formation of s(2)U34. This chain is tRNA-specific 2-thiouridylase MnmA, found in Halorhodospira halophila (strain DSM 244 / SL1) (Ectothiorhodospira halophila (strain DSM 244 / SL1)).